A 238-amino-acid chain; its full sequence is Probable transcriptional regulatory protein MGAS10750_Spy0264 (238 aa).

The protein belongs to the TACO1 family. YeeN subfamily.

The protein resides in the cytoplasm. The sequence is that of Probable transcriptional regulatory protein MGAS10750_Spy0264 from Streptococcus pyogenes serotype M4 (strain MGAS10750).